The sequence spans 148 residues: Snaclec 3 (148 aa).

A signal peptide spans 1 to 23 (WGDSSSSASACWSCSSPLSGTEA). Disulfide bonds link cysteine 27/cysteine 38, cysteine 55/cysteine 144, and cysteine 121/cysteine 136. The C-type lectin domain occupies 34-145 (YDQNCYKAFE…CSGTHSFVCK (112 aa)).

This sequence belongs to the snaclec family. In terms of assembly, heterodimer; disulfide-linked. As to expression, expressed by the venom gland.

Its subcellular location is the secreted. Its function is as follows. Interferes with one step of hemostasis (modulation of platelet aggregation, or coagulation cascade, for example). The polypeptide is Snaclec 3 (Echis carinatus sochureki (Saw-scaled viper)).